The primary structure comprises 92 residues: Putative membrane protein insertion efficiency factor (92 aa).

Belongs to the UPF0161 family.

It localises to the cell inner membrane. Functionally, could be involved in insertion of integral membrane proteins into the membrane. The protein is Putative membrane protein insertion efficiency factor of Synechococcus sp. (strain CC9605).